Here is a 281-residue protein sequence, read N- to C-terminus: Elongation factor Ts (281 aa).

The tract at residues 86–89 is involved in Mg(2+) ion dislocation from EF-Tu; it reads TDFV.

It belongs to the EF-Ts family.

It is found in the cytoplasm. In terms of biological role, associates with the EF-Tu.GDP complex and induces the exchange of GDP to GTP. It remains bound to the aminoacyl-tRNA.EF-Tu.GTP complex up to the GTP hydrolysis stage on the ribosome. The sequence is that of Elongation factor Ts from Beutenbergia cavernae (strain ATCC BAA-8 / DSM 12333 / CCUG 43141 / JCM 11478 / NBRC 16432 / NCIMB 13614 / HKI 0122).